Consider the following 403-residue polypeptide: Phosphopentomutase (403 aa).

Positions 13, 298, 303, 339, 340, and 351 each coordinate Mn(2+).

The protein belongs to the phosphopentomutase family. It depends on Mn(2+) as a cofactor.

The protein resides in the cytoplasm. The enzyme catalyses 2-deoxy-alpha-D-ribose 1-phosphate = 2-deoxy-D-ribose 5-phosphate. The catalysed reaction is alpha-D-ribose 1-phosphate = D-ribose 5-phosphate. Its pathway is carbohydrate degradation; 2-deoxy-D-ribose 1-phosphate degradation; D-glyceraldehyde 3-phosphate and acetaldehyde from 2-deoxy-alpha-D-ribose 1-phosphate: step 1/2. Isomerase that catalyzes the conversion of deoxy-ribose 1-phosphate (dRib-1-P) and ribose 1-phosphate (Rib-1-P) to deoxy-ribose 5-phosphate (dRib-5-P) and ribose 5-phosphate (Rib-5-P), respectively. This Streptococcus pyogenes serotype M5 (strain Manfredo) protein is Phosphopentomutase.